A 134-amino-acid chain; its full sequence is UPF0412 protein YaaI (134 aa).

The first 23 residues, 1 to 23, serve as a signal peptide directing secretion; that stretch reads MRSVLTISVGLLFGLALSSVAHA.

This sequence belongs to the UPF0412 family.

The polypeptide is UPF0412 protein YaaI (Salmonella paratyphi A (strain ATCC 9150 / SARB42)).